We begin with the raw amino-acid sequence, 107 residues long: Regulatory protein SoxS (107 aa).

Residues 8–106 enclose the HTH araC/xylS-type domain; sequence QTLIEWIDEH…DRTPSDYRHR (99 aa). 2 DNA-binding regions (H-T-H motif) span residues 25 to 46 and 73 to 96; these read DVVA…RTVT and IFDI…RREF.

It is found in the cytoplasm. Transcriptional activator of the superoxide response regulon of E.coli that includes at least 10 genes such as sodA, nfo, zwf and micF. Binds the DNA sequence 5'-GCACN(7)CAA-3'. It also facilitates the subsequent binding of RNA polymerase to the micF and the nfo promoters. The sequence is that of Regulatory protein SoxS (soxS) from Salmonella typhimurium (strain LT2 / SGSC1412 / ATCC 700720).